A 418-amino-acid polypeptide reads, in one-letter code: Gamma-glutamyl phosphate reductase (418 aa).

Belongs to the gamma-glutamyl phosphate reductase family.

It localises to the cytoplasm. It catalyses the reaction L-glutamate 5-semialdehyde + phosphate + NADP(+) = L-glutamyl 5-phosphate + NADPH + H(+). The protein operates within amino-acid biosynthesis; L-proline biosynthesis; L-glutamate 5-semialdehyde from L-glutamate: step 2/2. Functionally, catalyzes the NADPH-dependent reduction of L-glutamate 5-phosphate into L-glutamate 5-semialdehyde and phosphate. The product spontaneously undergoes cyclization to form 1-pyrroline-5-carboxylate. The chain is Gamma-glutamyl phosphate reductase from Trichlorobacter lovleyi (strain ATCC BAA-1151 / DSM 17278 / SZ) (Geobacter lovleyi).